Here is a 175-residue protein sequence, read N- to C-terminus: Translation initiation factor IF-3 (175 aa).

It belongs to the IF-3 family. As to quaternary structure, monomer.

Its subcellular location is the cytoplasm. IF-3 binds to the 30S ribosomal subunit and shifts the equilibrium between 70S ribosomes and their 50S and 30S subunits in favor of the free subunits, thus enhancing the availability of 30S subunits on which protein synthesis initiation begins. The sequence is that of Translation initiation factor IF-3 from Staphylococcus aureus (strain MRSA252).